The following is a 57-amino-acid chain: DNA-directed RNA polymerase subunit Rpo6 (57 aa).

It belongs to the archaeal Rpo6/eukaryotic RPB6 RNA polymerase subunit family. As to quaternary structure, part of the RNA polymerase complex.

It localises to the cytoplasm. The enzyme catalyses RNA(n) + a ribonucleoside 5'-triphosphate = RNA(n+1) + diphosphate. DNA-dependent RNA polymerase (RNAP) catalyzes the transcription of DNA into RNA using the four ribonucleoside triphosphates as substrates. The polypeptide is DNA-directed RNA polymerase subunit Rpo6 (Haloarcula marismortui (strain ATCC 43049 / DSM 3752 / JCM 8966 / VKM B-1809) (Halobacterium marismortui)).